The sequence spans 139 residues: Tetra-peptide repeat homeobox-like protein (139 aa).

Disordered stretches follow at residues 1-22 (MQDP…RQRQ) and 78-139 (ERWF…QQPQ). A DNA-binding region (homeobox) is located at residues 20–79 (QRQDRTIYNWKQQEVLENHFKEEQYPDYDTRQELAEMLNLREYQVQVWFKNRRAKRSRER). Positions 82-139 (QKQLQQLQKHPQQQHPQQQHPQQQLQQQQPQQQPQQQQPQQQPQQQQPQQQQLHQQPQ) are enriched in low complexity.

Belongs to the paired homeobox family.

The protein localises to the nucleus. In terms of biological role, transcription factor required for zygotic genome activation (ZGA), a critical event in early embryonic development during which the developmental control passes from maternally provided mRNAs to the expression of the zygotic genome after fertilization. Protein produced from maternal transcripts that binds and activates expression of key ZGA marker genes, such as NANOGNB, ZSCAN4, DUXB, KLF5 and DPPA3. Binds to regulatory DNA sequences containing a 5'-TAATCC-3' sequence motif. This chain is Tetra-peptide repeat homeobox-like protein, found in Homo sapiens (Human).